The sequence spans 114 residues: Phosphoribosyl-AMP cyclohydrolase (114 aa).

Asp76 is a binding site for Mg(2+). Residue Cys77 participates in Zn(2+) binding. Mg(2+)-binding residues include Asp78 and Asp80. Zn(2+) contacts are provided by Cys93 and Cys100.

The protein belongs to the PRA-CH family. As to quaternary structure, homodimer. It depends on Mg(2+) as a cofactor. Zn(2+) is required as a cofactor.

The protein localises to the cytoplasm. It catalyses the reaction 1-(5-phospho-beta-D-ribosyl)-5'-AMP + H2O = 1-(5-phospho-beta-D-ribosyl)-5-[(5-phospho-beta-D-ribosylamino)methylideneamino]imidazole-4-carboxamide. It participates in amino-acid biosynthesis; L-histidine biosynthesis; L-histidine from 5-phospho-alpha-D-ribose 1-diphosphate: step 3/9. Catalyzes the hydrolysis of the adenine ring of phosphoribosyl-AMP. This chain is Phosphoribosyl-AMP cyclohydrolase, found in Streptococcus gordonii (strain Challis / ATCC 35105 / BCRC 15272 / CH1 / DL1 / V288).